A 290-amino-acid chain; its full sequence is Pirin (290 aa).

Residues H56, H58, H101, and E103 each coordinate Fe cation.

Belongs to the pirin family. As to quaternary structure, may interact with NF1/CTF1. Interacts with BCL3. Identified in a complex comprised of PIR, BLC3, NFKB1 and target DNA. Fe cation is required as a cofactor. In terms of tissue distribution, weakly expressed in bone marrow.

It is found in the nucleus. The protein resides in the cytoplasm. It catalyses the reaction quercetin + O2 = 2-(3,4-dihydroxybenzoyloxy)-4,6-dihydroxybenzoate + CO. It participates in flavonoid metabolism; quercetin degradation. Transcriptional coregulator of NF-kappa-B which facilitates binding of NF-kappa-B proteins to target kappa-B genes in a redox-state-dependent manner. May be required for efficient terminal myeloid maturation of hematopoietic cells. Has quercetin 2,3-dioxygenase activity (in vitro). This chain is Pirin (Pir), found in Mus musculus (Mouse).